Reading from the N-terminus, the 220-residue chain is Protein-L-isoaspartate O-methyltransferase (220 aa).

The active site involves serine 68.

This sequence belongs to the methyltransferase superfamily. L-isoaspartyl/D-aspartyl protein methyltransferase family.

The protein resides in the cytoplasm. The catalysed reaction is [protein]-L-isoaspartate + S-adenosyl-L-methionine = [protein]-L-isoaspartate alpha-methyl ester + S-adenosyl-L-homocysteine. In terms of biological role, catalyzes the methyl esterification of L-isoaspartyl residues in peptides and proteins that result from spontaneous decomposition of normal L-aspartyl and L-asparaginyl residues. It plays a role in the repair and/or degradation of damaged proteins. The sequence is that of Protein-L-isoaspartate O-methyltransferase from Dictyoglomus turgidum (strain DSM 6724 / Z-1310).